Consider the following 164-residue polypeptide: Succinate dehydrogenase assembly factor 2, mitochondrial (164 aa).

The N-terminal 27 residues, 1–27, are a transit peptide targeting the mitochondrion; sequence MAVVTLIPTLARVLSKHSLLSPLLSVT.

The protein belongs to the SDHAF2 family. In terms of assembly, interacts with SDHA within the SDH catalytic dimer.

It is found in the mitochondrion matrix. Its function is as follows. Plays an essential role in the assembly of succinate dehydrogenase (SDH), an enzyme complex (also referred to as respiratory complex II) that is a component of both the tricarboxylic acid (TCA) cycle and the mitochondrial electron transport chain, and which couples the oxidation of succinate to fumarate with the reduction of ubiquinone (coenzyme Q) to ubiquinol. Required for flavinylation (covalent attachment of FAD) of the flavoprotein subunit SDHA of the SDH catalytic dimer. The protein is Succinate dehydrogenase assembly factor 2, mitochondrial of Rattus norvegicus (Rat).